Here is a 299-residue protein sequence, read N- to C-terminus: N-carbamoylputrescine amidase (299 aa).

The region spanning 10-268 is the CN hydrolase domain; sequence VVVSSLQFAC…EAVLVAQFDL (259 aa). The active-site Proton acceptor is Glu-49. Residue Lys-122 is the Proton donor of the active site. Cys-159 functions as the Nucleophile in the catalytic mechanism.

It belongs to the carbon-nitrogen hydrolase superfamily. As to quaternary structure, homooctamer (isoform 2). As to expression, expressed in roots, stems, leaves and flowers.

It catalyses the reaction N-carbamoylputrescine + H2O + 2 H(+) = putrescine + NH4(+) + CO2. It participates in amine and polyamine biosynthesis; putrescine biosynthesis via agmatine pathway; putrescine from N-carbamoylputrescine (amidase route): step 1/1. Functionally, involved in polyamine biosynthesis. Catalyzes the hydrolysis of N-carbamoylputrescine to produce putrescine and ammonia. The polypeptide is N-carbamoylputrescine amidase (Arabidopsis thaliana (Mouse-ear cress)).